The chain runs to 172 residues: MERAEKREFVTELNEVFKASGSVVVAHYAGATVAQMNDFRSKMRAAGGTVKVAKNRLAKIALQGTDAEGISNLFTGQTLIAYSTDPITAPKVVVDFAKGNDKIVVLGGAMGTTTLNADGVKSLATLPSLDELRAKLLGMIQTPATRIAGVVAAPASQLARVFSAYAKKDEAA.

The protein belongs to the universal ribosomal protein uL10 family. As to quaternary structure, part of the ribosomal stalk of the 50S ribosomal subunit. The N-terminus interacts with L11 and the large rRNA to form the base of the stalk. The C-terminus forms an elongated spine to which L12 dimers bind in a sequential fashion forming a multimeric L10(L12)X complex.

Its function is as follows. Forms part of the ribosomal stalk, playing a central role in the interaction of the ribosome with GTP-bound translation factors. This chain is Large ribosomal subunit protein uL10, found in Rhizobium rhizogenes (strain K84 / ATCC BAA-868) (Agrobacterium radiobacter).